The sequence spans 329 residues: Glucosyl-3-phosphoglycerate synthase (329 aa).

UDP-alpha-D-glucose contacts are provided by residues Pro-55–Glu-59, Ser-86, Lys-119, and Asp-139–Asp-141. Position 141 (Asp-141) interacts with Mn(2+). Position 189 to 192 (Gly-189 to Thr-192) interacts with (2R)-3-phosphoglycerate. Residue Tyr-234–Glu-237 coordinates UDP-alpha-D-glucose. His-263 is a binding site for Mn(2+). Position 265 (Asn-265) interacts with (2R)-3-phosphoglycerate.

Belongs to the glycosyltransferase 2 family. In terms of assembly, homodimer. Requires Mg(2+) as cofactor. Mn(2+) serves as cofactor.

It catalyses the reaction an NDP-alpha-D-glucose + (2R)-3-phosphoglycerate = (2R)-2-O-(alpha-D-glucopyranosyl)-3-phospho-glycerate + a ribonucleoside 5'-diphosphate + H(+). It carries out the reaction (2R)-3-phosphoglycerate + UDP-alpha-D-glucose = (2R)-2-O-(alpha-D-glucopyranosyl)-3-phospho-glycerate + UDP + H(+). The enzyme catalyses GDP-D-glucose + (2R)-3-phosphoglycerate = (2R)-2-O-(alpha-D-glucopyranosyl)-3-phospho-glycerate + GDP + H(+). Functionally, involved in the biosynthesis of 6-O-methylglucose lipopolysaccarides (MGLPs). Catalyzes the transfer of the glucose moiety from UDP-alpha-D-glucose (UDP-Glc) to the position 2 of 3-phospho-D-glycerate (3-PGA) to form glucosyl-3-phosphoglycerate (GPG). To a lesser extent can also use GDP-Glc but not UDP-Gal or UDP-GlcNAc as the sugar donor. The sequence is that of Glucosyl-3-phosphoglycerate synthase from Mycolicibacterium paratuberculosis (strain ATCC BAA-968 / K-10) (Mycobacterium paratuberculosis).